A 307-amino-acid chain; its full sequence is Metapyrocatechase (307 aa).

2 consecutive VOC domains span residues 7–122 (RPGH…LYAD) and 150–269 (RFDH…VFCG). Positions 153, 214, and 265 each coordinate Fe cation.

Belongs to the extradiol ring-cleavage dioxygenase family. Homotetramer. Fe(2+) serves as cofactor.

It carries out the reaction catechol + O2 = (2Z,4E)-2-hydroxy-6-oxohexa-2,4-dienoate + H(+). The protein operates within xenobiotic degradation; toluene degradation. The protein is Metapyrocatechase (bztE) of Pseudomonas aeruginosa.